The primary structure comprises 199 residues: Recombination protein RecR (199 aa).

The C4-type zinc finger occupies 58-73 (CQTCRILSETDLCSLC). The 96-residue stretch at 81 to 176 (GQLCVVEMPS…TTTRIAHGVP (96 aa)) folds into the Toprim domain.

This sequence belongs to the RecR family.

May play a role in DNA repair. It seems to be involved in an RecBC-independent recombinational process of DNA repair. It may act with RecF and RecO. The chain is Recombination protein RecR from Nitrosococcus oceani (strain ATCC 19707 / BCRC 17464 / JCM 30415 / NCIMB 11848 / C-107).